The primary structure comprises 250 residues: NAD(P)H-hydrate epimerase (250 aa).

In terms of domain architecture, YjeF N-terminal spans 14-238 (AAALDVELMS…SIAEKYGIQK (225 aa)). 74 to 78 (NNGGD) contacts (6S)-NADPHX. Positions 75 and 143 each coordinate K(+). Residues 147-154 (GFSFHGTA), Tyr-159, and Asp-180 each bind (6S)-NADPHX. Ser-183 is a binding site for K(+).

The protein belongs to the NnrE/AIBP family. K(+) serves as cofactor.

The enzyme catalyses (6R)-NADHX = (6S)-NADHX. It carries out the reaction (6R)-NADPHX = (6S)-NADPHX. Functionally, catalyzes the epimerization of the S- and R-forms of NAD(P)HX, a damaged form of NAD(P)H that is a result of enzymatic or heat-dependent hydration. This is a prerequisite for the S-specific NAD(P)H-hydrate dehydratase to allow the repair of both epimers of NAD(P)HX. The protein is NAD(P)H-hydrate epimerase of Thalassiosira pseudonana (Marine diatom).